Here is a 341-residue protein sequence, read N- to C-terminus: Protein BEARSKIN2 (341 aa).

The NAC domain maps to 9 to 160; that stretch reads VPPGFRFHPT…GWVVCRVFMK (152 aa). The DNA-binding element occupies 109–166; that stretch reads IGMRKTLVFYKGRAPHGQKTDWIMHEYRLEDADDPQANPSEDGWVVCRVFMKKNLFKV.

In terms of tissue distribution, expressed throughout the root cap, in both columella (COL) and lateral root cap (LRC) cells, with higher levels in the COL-adjoining LRC than the upper LRC. Also present at low levels expression in the tips of cotyledons and the cotyledon vasculature, as weel as in vasculature of the first pair of true leaves and at the hydathodes.

It localises to the nucleus. In terms of biological role, transcription activator. Together with BRN1 and SMB, regulates cellular maturation of root cap. Promotes the expression of genes involved in secondary cell walls (SCW) biosynthesis. The polypeptide is Protein BEARSKIN2 (BRN2) (Arabidopsis thaliana (Mouse-ear cress)).